A 125-amino-acid chain; its full sequence is Egg cell-secreted protein 1.3 (125 aa).

A signal peptide spans 1–24 (MASNTSFLFVTVTLLLVLNVSSRA).

This sequence belongs to the plant egg cell-secreted peptide family. Restricted to female reproductive tissues, specifically accumulating in storage vesicles of the unfertilized egg cell.

Its subcellular location is the cytoplasmic vesicle. The protein localises to the secreted. Involved in the regulation of gamete interactions during the double fertilization and to prevent multiple-pollen tube attraction; mediates the redistribution of the gamete fusogen HAP2/GCS1 to the cell surface after secretion upon sperm arrival. The protein is Egg cell-secreted protein 1.3 (EC1.3) of Arabidopsis thaliana (Mouse-ear cress).